The primary structure comprises 243 residues: MKKDYIKIIDKIANWMNQTLTEAKSNGFVYGVSGGIDSALICAIASKFFKDRSLAVRLDIFNSVNDTKDANLVISHFKVNSVDKNLEQVFNTFIKDLPDNKLALMNLKSRLRMVCLYYYAQTYNYLVCGTSNADELYTGYFTKFGDSGSDFIPLANLTKTDVRECSKILGVPSQIINKDPSAGLFENQKDEDDLKVSYLEIDNFLENNPISESSKNRILDLHKISEHKRNMPKTILKLGEIIK.

Residue 31 to 38 participates in ATP binding; that stretch reads GVSGGIDS. D37 is a binding site for Mg(2+). R110 is a deamido-NAD(+) binding site. T130 contributes to the ATP binding site. E135 contacts Mg(2+). K143 and D150 together coordinate deamido-NAD(+). Residues K159 and S181 each coordinate ATP. Residue 227–228 participates in deamido-NAD(+) binding; sequence HK.

This sequence belongs to the NAD synthetase family. In terms of assembly, homodimer.

The catalysed reaction is deamido-NAD(+) + NH4(+) + ATP = AMP + diphosphate + NAD(+) + H(+). Its pathway is cofactor biosynthesis; NAD(+) biosynthesis; NAD(+) from deamido-NAD(+) (ammonia route): step 1/1. In terms of biological role, catalyzes the ATP-dependent amidation of deamido-NAD to form NAD. Uses ammonia as a nitrogen source. The polypeptide is NH(3)-dependent NAD(+) synthetase (Malacoplasma penetrans (strain HF-2) (Mycoplasma penetrans)).